A 305-amino-acid polypeptide reads, in one-letter code: Coiled-coil domain-containing protein 50 (305 aa).

Alanine 2 is subject to N-acetylalanine. Serine 5 carries the post-translational modification Phosphoserine. The stretch at 86 to 130 (EIAQEIQEKLTIEAERRRIQEKKDEDIARLLQEKELQEEKRRKKH) forms a coiled coil. Disordered regions lie at residues 122–142 (QEEKRRKKHTPEFSGGSVFGD) and 218–305 (KKAK…HNKQ). Composition is skewed to basic and acidic residues over residues 218–239 (KKAKEREKSSLDKRKHDPECKL) and 247–263 (KSKEGDEAHRSKIDRPS). A compositionally biased stretch (polar residues) spans 279–305 (THFTNQHSTTWHLPKSESSQKGFHNKQ).

In terms of assembly, interacts with RNF126. In terms of processing, phosphorylated on tyrosine residues. In terms of tissue distribution, widely expressed.

It is found in the cytoplasm. In terms of biological role, involved in EGFR signaling. This chain is Coiled-coil domain-containing protein 50 (Ccdc50), found in Mus musculus (Mouse).